Consider the following 479-residue polypeptide: ESX-1 secretion system ATPase EccB1 (479 aa).

The Cytoplasmic segment spans residues 1–44 (MAGFRLTTKVQVSGWRFLLRRVEHAIVRRDTRMFDDPLQFYSRA). The helical transmembrane segment at 45 to 65 (VFAGVVVSVLICLGAALMAYF) threads the bilayer. The Periplasmic portion of the chain corresponds to 66–479 (KPLGKQGSDQ…NPRKVASGEG (414 aa)). Cys-152 and Cys-347 are oxidised to a cystine.

It belongs to the EccB family. In terms of assembly, part of the ESX-1 / type VII secretion system (T7SS), which is composed of cytosolic and membrane components. The ESX-1 membrane complex is composed of EccB1, EccCa1, EccCb1, EccD1 and EccE1.

It localises to the cell inner membrane. Its function is as follows. An ATPase. Part of the ESX-1 / type VII specialized secretion system (T7SS), which exports several proteins including EsxA and EsxB. Plays a role in DNA conjugation, in both donor and recipient strains. This Mycolicibacterium smegmatis (strain MKD8) (Mycobacterium smegmatis) protein is ESX-1 secretion system ATPase EccB1.